Here is a 186-residue protein sequence, read N- to C-terminus: Dihydrofolate reductase (186 aa).

The DHFR domain maps to 3–183 (KFSLIVAVCA…IQYQYRIYEK (181 aa)). Residues alanine 9 and 15–21 (GIGIKGD) each bind NADP(+). Substrate is bound at residue 29 to 34 (ELKYFS). 53-55 (RKT) is a binding site for NADP(+). Substrate is bound at residue arginine 69. Residues 75–77 (TRD) and 116–123 (GGNAVYKE) contribute to the NADP(+) site.

This sequence belongs to the dihydrofolate reductase family.

The catalysed reaction is (6S)-5,6,7,8-tetrahydrofolate + NADP(+) = 7,8-dihydrofolate + NADPH + H(+). Its pathway is cofactor biosynthesis; tetrahydrofolate biosynthesis; 5,6,7,8-tetrahydrofolate from 7,8-dihydrofolate: step 1/1. Its function is as follows. Key enzyme in folate metabolism. Catalyzes an essential reaction for de novo glycine and purine synthesis, and for DNA precursor synthesis. The polypeptide is Dihydrofolate reductase (DHFR) (Aedes albopictus (Asian tiger mosquito)).